Reading from the N-terminus, the 362-residue chain is N-acylethanolamine-hydrolyzing acid amidase (362 aa).

Positions 1 to 33 are cleaved as a signal peptide; the sequence is MGTPAIRAACHGAHLALALLLLLSLSDPWLWAT. Residues asparagine 42 and asparagine 112 are each glycosylated (N-linked (GlcNAc...) asparagine). Cysteine 131 (nucleophile) is an active-site residue. Asparagine 314 and asparagine 338 each carry an N-linked (GlcNAc...) asparagine glycan.

Belongs to the acid ceramidase family. Heterodimer of an alpha and a beta subunit, produced by autocatalytic cleavage. In terms of processing, N-glycosylated. Tunicamycin treatment causes a reduction in specific activity against N-palmitoylethanolamine. Post-translationally, autoproteolytic cleavage at pH 4.5 gives rise to the alpha and beta subunit. Cleavage gives rise to a conformation change that activates the enzyme. The same catalytic Cys residue mediates the autoproteolytic cleavage and subsequent hydrolysis of lipid substrates. As to expression, expressed in brain, cecum, colon, heart, ileum, kidney, liver, lung, spleen, stomach, submaxillary gland, testis and thymus.

Its subcellular location is the lysosome. It is found in the membrane. The catalysed reaction is N-hexadecanoylethanolamine + H2O = ethanolamine + hexadecanoate. It carries out the reaction an N-(long-chain fatty acyl)ethanolamine + H2O = a long-chain fatty acid + ethanolamine. It catalyses the reaction N-dodecanoylethanolamine + H2O = dodecanoate + ethanolamine. The enzyme catalyses N-tetradecanoylethanolamine + H2O = tetradecanoate + ethanolamine. The catalysed reaction is an N-acylsphing-4-enine + H2O = sphing-4-enine + a fatty acid. It carries out the reaction N-hexadecanoylsphing-4-enine + H2O = sphing-4-enine + hexadecanoate. It catalyses the reaction N-dodecanoylsphing-4-enine + H2O = dodecanoate + sphing-4-enine. Its pathway is lipid metabolism; fatty acid metabolism. With respect to regulation, stimulated by DTT. Stimulated by nonionic detergent of the polyoxyethylenep-t-octylphenylether type (Triton X-100 or Nonidet P-40) whereas 3-[(3-cholamidopropyl)dimethylammonio]propane-1-sulfonate (CHAPS) and octyl alpha-D-glucopyranoside decrease the N-(long-chain-acyl)ethanolamine deacylase activity. Polysorbate 20 (Tween 20) is inhibitory. Stimulated by endogenous phospholipids such as choline- or ethanolamine-containing phospholipids, and dihydrolipoic acid. Degrades bioactive fatty acid amides to their corresponding acids, with the following preference: N-palmitoylethanolamine &gt; N-myristoylethanolamine &gt; N-stearoylethanolamine &gt; N-oleoylethanolamine &gt; N-linoleoylethanolamine &gt; N-arachidonoylethanolamine. The sequence is that of N-acylethanolamine-hydrolyzing acid amidase from Rattus norvegicus (Rat).